A 181-amino-acid polypeptide reads, in one-letter code: UPF0398 protein lin2003 (181 aa).

It belongs to the UPF0398 family.

The polypeptide is UPF0398 protein lin2003 (Listeria innocua serovar 6a (strain ATCC BAA-680 / CLIP 11262)).